A 234-amino-acid polypeptide reads, in one-letter code: RNA chaperone ProQ (234 aa).

A compositionally biased stretch (basic and acidic residues) spans 104 to 130 (LEEAKARVQAQRDARKREAAENGEKRE). Positions 104-186 (LEEAKARVQA…QRSTPVTSLE (83 aa)) are disordered. Positions 131 to 142 (PRRPRPAGKKPT) are enriched in basic residues. Basic and acidic residues-rich tracts occupy residues 143-156 (ARRD…EVRK) and 163-176 (TSER…ETTE). The segment covering 177 to 186 (QRSTPVTSLE) has biased composition (polar residues).

Belongs to the ProQ family.

It localises to the cytoplasm. RNA chaperone with significant RNA binding, RNA strand exchange and RNA duplexing activities. May regulate ProP activity through an RNA-based, post-transcriptional mechanism. This chain is RNA chaperone ProQ, found in Edwardsiella ictaluri (strain 93-146).